Consider the following 72-residue polypeptide: Dermaseptin-A4 (72 aa).

An N-terminal signal peptide occupies residues 1–22 (MAFLKKSLFLVLFLGMVSLSIC). Positions 23-41 (EEEKREEENEQEDDEQSEE) are excised as a propeptide. The disordered stretch occupies residues 24-43 (EEKREEENEQEDDEQSEEKR). The span at 30 to 39 (ENEQEDDEQS) shows a compositional bias: acidic residues. Ala-69 is modified (alanine amide). A propeptide spanning residues 71–72 (EQ) is cleaved from the precursor.

Belongs to the frog skin active peptide (FSAP) family. Dermaseptin subfamily. As to expression, expressed by the skin glands.

It is found in the secreted. In terms of biological role, possesses a potent antimicrobial activity against Gram-positive and Gram-negative bacteria. Probably acts by disturbing membrane functions with its amphipathic structure. In Agalychnis annae (Blue-sided leaf frog), this protein is Dermaseptin-A4.